A 278-amino-acid chain; its full sequence is Orotidine 5'-phosphate decarboxylase (278 aa).

K95 functions as the Proton donor in the catalytic mechanism.

It belongs to the OMP decarboxylase family. Type 2 subfamily.

The enzyme catalyses orotidine 5'-phosphate + H(+) = UMP + CO2. It participates in pyrimidine metabolism; UMP biosynthesis via de novo pathway; UMP from orotate: step 2/2. The polypeptide is Orotidine 5'-phosphate decarboxylase (Mycobacterium marinum (strain ATCC BAA-535 / M)).